Here is a 963-residue protein sequence, read N- to C-terminus: Iron-responsive element-binding protein 2 (963 aa).

[4Fe-4S] cluster is bound by residues cysteine 512, cysteine 578, and cysteine 581.

Belongs to the aconitase/IPM isomerase family. As to quaternary structure, interacts with RBCK1 only in iron-rich conditions. Interacts (when associated with the 4Fe-4S) with FBXL5. Interacts with CIAO1 and CIAO2A. [4Fe-4S] cluster is required as a cofactor. Ubiquitinated and degraded by the proteasome in presence of high level of iron and oxygen. Ubiquitinated by a SCF complex containing FBXL5. Upon iron and oxygen depletion FBXL5 is degraded, preventing ubiquitination and allowing its RNA-binding activity. Ubiquitously expressed in rat tissues, the highest amounts present in skeletal muscle and heart.

It localises to the cytoplasm. Functionally, RNA-binding protein that binds to iron-responsive elements (IRES), which are stem-loop structures found in the 5'-UTR of ferritin, and delta aminolevulinic acid synthase mRNAs, and in the 3'-UTR of transferrin receptor mRNA. Binding to the IRE element in ferritin results in the repression of its mRNA translation. Binding of the protein to the transferrin receptor mRNA inhibits the degradation of this otherwise rapidly degraded mRNA. This Rattus norvegicus (Rat) protein is Iron-responsive element-binding protein 2 (Ireb2).